The following is a 298-amino-acid chain: Acetyl-coenzyme A carboxylase carboxyl transferase subunit beta (298 aa).

Residues 41-298 form the CoA carboxyltransferase N-terminal domain; the sequence is PTIECPECHA…RIVSKLMNLP (258 aa). The Zn(2+) site is built by Cys-45, Cys-48, Cys-64, and Cys-67. A C4-type zinc finger spans residues 45–67; that stretch reads CPECHALVTRTAIAFNAYVCPSC.

This sequence belongs to the AccD/PCCB family. In terms of assembly, acetyl-CoA carboxylase is a heterohexamer composed of biotin carboxyl carrier protein (AccB), biotin carboxylase (AccC) and two subunits each of ACCase subunit alpha (AccA) and ACCase subunit beta (AccD). Zn(2+) serves as cofactor.

The protein localises to the cytoplasm. The catalysed reaction is N(6)-carboxybiotinyl-L-lysyl-[protein] + acetyl-CoA = N(6)-biotinyl-L-lysyl-[protein] + malonyl-CoA. The protein operates within lipid metabolism; malonyl-CoA biosynthesis; malonyl-CoA from acetyl-CoA: step 1/1. Component of the acetyl coenzyme A carboxylase (ACC) complex. Biotin carboxylase (BC) catalyzes the carboxylation of biotin on its carrier protein (BCCP) and then the CO(2) group is transferred by the transcarboxylase to acetyl-CoA to form malonyl-CoA. This chain is Acetyl-coenzyme A carboxylase carboxyl transferase subunit beta, found in Acinetobacter baylyi (strain ATCC 33305 / BD413 / ADP1).